The sequence spans 185 residues: Ribosome-recycling factor (185 aa).

This sequence belongs to the RRF family.

The protein resides in the cytoplasm. Its function is as follows. Responsible for the release of ribosomes from messenger RNA at the termination of protein biosynthesis. May increase the efficiency of translation by recycling ribosomes from one round of translation to another. This is Ribosome-recycling factor from Listeria welshimeri serovar 6b (strain ATCC 35897 / DSM 20650 / CCUG 15529 / CIP 8149 / NCTC 11857 / SLCC 5334 / V8).